The following is a 689-amino-acid chain: Transketolase (689 aa).

Residue histidine 56 coordinates substrate. Residues histidine 96 and glycine 144–leucine 146 each bind thiamine diphosphate. Aspartate 185 is a Mg(2+) binding site. Thiamine diphosphate contacts are provided by glycine 186 and asparagine 215. Mg(2+)-binding residues include asparagine 215 and isoleucine 217. Histidine 289, arginine 380, and serine 407 together coordinate substrate. Residue histidine 289 coordinates thiamine diphosphate. Glutamate 434 acts as the Proton donor in catalysis. A thiamine diphosphate-binding site is contributed by phenylalanine 460. Positions 484, 492, and 543 each coordinate substrate.

This sequence belongs to the transketolase family. In terms of assembly, homodimer. The cofactor is Mg(2+). It depends on Ca(2+) as a cofactor. Mn(2+) is required as a cofactor. Co(2+) serves as cofactor. Requires thiamine diphosphate as cofactor.

It carries out the reaction D-sedoheptulose 7-phosphate + D-glyceraldehyde 3-phosphate = aldehydo-D-ribose 5-phosphate + D-xylulose 5-phosphate. Functionally, catalyzes the transfer of a two-carbon ketol group from a ketose donor to an aldose acceptor, via a covalent intermediate with the cofactor thiamine pyrophosphate. This chain is Transketolase (tkt), found in Aquifex aeolicus (strain VF5).